The chain runs to 245 residues: Intron-associated endonuclease 1 (245 aa).

In terms of domain architecture, GIY-YIG spans 1–88; that stretch reads MKSGIYQIKN…IKELNSKING (88 aa).

This sequence to endonucleases of group I introns of fungi and phage. It depends on Mg(2+) as a cofactor.

In terms of biological role, this endonuclease is specific to the thymidylate synthase (td) gene splice junction and is involved in intron homing. In Enterobacteria phage T4 (Bacteriophage T4), this protein is Intron-associated endonuclease 1 (ITEVIR).